The chain runs to 366 residues: 3-dehydroquinate synthase (366 aa).

NAD(+) contacts are provided by residues 71 to 76, 105 to 109, 129 to 130, Lys-142, Lys-151, and 169 to 172; these read DGEQYK, GVIGD, TT, and CLKT. Zn(2+)-binding residues include Glu-184, His-247, and His-264.

This sequence belongs to the sugar phosphate cyclases superfamily. Dehydroquinate synthase family. The cofactor is Co(2+). Zn(2+) serves as cofactor. It depends on NAD(+) as a cofactor.

It localises to the cytoplasm. It carries out the reaction 7-phospho-2-dehydro-3-deoxy-D-arabino-heptonate = 3-dehydroquinate + phosphate. It participates in metabolic intermediate biosynthesis; chorismate biosynthesis; chorismate from D-erythrose 4-phosphate and phosphoenolpyruvate: step 2/7. Its function is as follows. Catalyzes the conversion of 3-deoxy-D-arabino-heptulosonate 7-phosphate (DAHP) to dehydroquinate (DHQ). The protein is 3-dehydroquinate synthase of Serratia proteamaculans (strain 568).